A 334-amino-acid polypeptide reads, in one-letter code: Retinol dehydrogenase 13 (334 aa).

Serine 2 carries the post-translational modification N-acetylserine. 45-51 (GANTGIG) serves as a coordination point for NADP(+). A substrate-binding site is contributed by serine 174. The active-site Proton acceptor is the tyrosine 200.

The protein belongs to the short-chain dehydrogenases/reductases (SDR) family.

The protein localises to the mitochondrion inner membrane. The catalysed reaction is all-trans-retinol + NADP(+) = all-trans-retinal + NADPH + H(+). The protein operates within cofactor metabolism; retinol metabolism. Functionally, retinol dehydrogenase with a clear preference for NADP. Oxidizes all-trans-retinol, but seems to reduce all-trans-retinal with much higher efficiency. Has no activity towards steroid. The polypeptide is Retinol dehydrogenase 13 (Rdh13) (Mus musculus (Mouse)).